Here is a 256-residue protein sequence, read N- to C-terminus: MNFTVIIPARYASSRLPGKPLADIAGKPMIQHVWEKAQQSGATRVVVATDYEEVARAVRGFDGEVCMTSSQHNSGTERLAEVIEKLAVPDDEIIVNIQGDEPLIPPVIVSQVAQNLQKYQVNMATLAVKIEDVEELFNPNVVKVLTDKDGYVLYFSRAVIPWDRDQFVQLGKADLSQLQLHQHYFRHIGIYAYRAGFIKQYVQWQPTTLEQIERLEQLRVLWNGERIHVELAKQAPAVGVDTVEDLEKVRSILSHV.

This sequence belongs to the KdsB family.

Its subcellular location is the cytoplasm. The catalysed reaction is 3-deoxy-alpha-D-manno-oct-2-ulosonate + CTP = CMP-3-deoxy-beta-D-manno-octulosonate + diphosphate. Its pathway is nucleotide-sugar biosynthesis; CMP-3-deoxy-D-manno-octulosonate biosynthesis; CMP-3-deoxy-D-manno-octulosonate from 3-deoxy-D-manno-octulosonate and CTP: step 1/1. It functions in the pathway bacterial outer membrane biogenesis; lipopolysaccharide biosynthesis. Functionally, activates KDO (a required 8-carbon sugar) for incorporation into bacterial lipopolysaccharide in Gram-negative bacteria. In Histophilus somni (strain 2336) (Haemophilus somnus), this protein is 3-deoxy-manno-octulosonate cytidylyltransferase.